We begin with the raw amino-acid sequence, 542 residues long: Excitatory amino acid transporter 1 (542 aa).

Residues Met1–Arg47 lie on the Cytoplasmic side of the membrane. The helical transmembrane segment at Asn48 to Leu68 threads the bilayer. Over Arg69 to Glu86 the chain is Extracellular. A helical transmembrane segment spans residues Leu87–Met108. At Ala109 to Arg122 the chain is on the cytoplasmic side. A helical membrane pass occupies residues Ala123–Ile145. Topologically, residues His146 to Gly236 are extracellular. Residues Ser237–Met260 traverse the membrane as a helical segment. At Lys261–Glu269 the chain is on the cytoplasmic side. Residues Phe270–Ile297 traverse the membrane as a helical segment. The Extracellular segment spans residues Ala298–Thr318. The helical transmembrane segment at Val319 to Val340 threads the bilayer. At Thr341–Pro345 the chain is on the cytoplasmic side. An intramembrane region (discontinuously helical) is located at residues Trp346 to Leu376. Ser363–Ser365 provides a ligand contact to L-aspartate. The Cytoplasmic portion of the chain corresponds to Glu377–Arg385. The helical transmembrane segment at Val386–Phe412 threads the bilayer. Positions 394, 396, and 398 each coordinate Na(+). Residue Thr402 coordinates L-aspartate. Residues Ile413 to Gln425 lie on the Extracellular side of the membrane. Residues Ile426–Gly459 constitute an intramembrane region (discontinuously helical). Ile443–Gly447 provides a ligand contact to L-aspartate. At Leu460–Asp472 the chain is on the extracellular side. Residues Trp473–Val494 traverse the membrane as a helical segment. The L-aspartate site is built by Asp476 and Asn483. Residues Asn483 and Asp487 each coordinate Na(+). Over Glu495–Met542 the chain is Cytoplasmic. Phosphoserine is present on Ser512.

Belongs to the dicarboxylate/amino acid:cation symporter (DAACS) (TC 2.A.23) family. SLC1A3 subfamily. Homotrimer. In terms of processing, glycosylated. In terms of tissue distribution, detected in brain. Detected at very much lower levels in heart, lung, placenta and skeletal muscle. Highly expressed in cerebellum, but also found in frontal cortex, hippocampus and basal ganglia.

The protein resides in the cell membrane. The enzyme catalyses K(+)(in) + L-glutamate(out) + 3 Na(+)(out) + H(+)(out) = K(+)(out) + L-glutamate(in) + 3 Na(+)(in) + H(+)(in). It carries out the reaction K(+)(in) + L-aspartate(out) + 3 Na(+)(out) + H(+)(out) = K(+)(out) + L-aspartate(in) + 3 Na(+)(in) + H(+)(in). It catalyses the reaction D-aspartate(out) + K(+)(in) + 3 Na(+)(out) + H(+)(out) = D-aspartate(in) + K(+)(out) + 3 Na(+)(in) + H(+)(in). Its function is as follows. Sodium-dependent, high-affinity amino acid transporter that mediates the uptake of L-glutamate and also L-aspartate and D-aspartate. Functions as a symporter that transports one amino acid molecule together with two or three Na(+) ions and one proton, in parallel with the counter-transport of one K(+) ion. Mediates Cl(-) flux that is not coupled to amino acid transport; this avoids the accumulation of negative charges due to aspartate and Na(+) symport. Plays a redundant role in the rapid removal of released glutamate from the synaptic cleft, which is essential for terminating the postsynaptic action of glutamate. The polypeptide is Excitatory amino acid transporter 1 (Homo sapiens (Human)).